The primary structure comprises 295 residues: Probable endonuclease 4 (295 aa).

The Zn(2+) site is built by H78, H118, E154, D188, H191, H225, D238, H240, and E270.

It belongs to the AP endonuclease 2 family. The cofactor is Zn(2+).

The enzyme catalyses Endonucleolytic cleavage to 5'-phosphooligonucleotide end-products.. Its function is as follows. Endonuclease IV plays a role in DNA repair. It cleaves phosphodiester bonds at apurinic or apyrimidinic (AP) sites, generating a 3'-hydroxyl group and a 5'-terminal sugar phosphate. In Vibrio parahaemolyticus serotype O3:K6 (strain RIMD 2210633), this protein is Probable endonuclease 4.